A 619-amino-acid polypeptide reads, in one-letter code: MIYSGDVQRIEPAPVAGPAPLDVAHLILAGFDRHYALFRYSAQRAKSLFESGDWHGMQRLSRERIEYYDMRVRECATQLDSALRGSDARTADGSRANGSAALSEAQTAFWQAVKQEFVGLLADHRQPECAETFFNSVSCRILHRDYFHNDFLFVRPAIATDYLDSRIPSYRVYYPVAEGLHKSLIRMVADFGLAVPYADLPRDARLLARAAVRQLRGQLPRHAGPRLASDCQIQVLGSLFFRNTGAYIVGRLINQGTVYPFAVALRRNPAGQVCLDALLLGADDLSTLFSFTRAYFLVDMETPAAVVNFLASLLPRKPKAELYTMLGLQKQGKTLFYRDFLHHLTHSRDAFDIAPGIRGMVMCVFTLPSYPYVFKLIKDRIDKDGMDHATVRRKYQMVKLHDRVGRMADTWEYSQVALPRSRFAPRLLEELRRLVPSLIEENGDTVVIRHVYIERRMMPLNLYLRHASDPLLEVAVREYGDAIRQLATANIFPGDMLYKNFGVTRLGRVVFYDYDEIQRMTEMNFRAIPPAPNEEAELSSEPWYAVGPNDVFPEEFGRFLLGDPRVRQAFLRHHADLLAPQWWQACRARVAQGRIEEFFPYDTDRRLHPQAAPPPRTAA.

ATP contacts are provided by residues 354 to 360 (APGIRGM) and lysine 375. Residue aspartate 409 is part of the active site.

The protein belongs to the AceK family.

The protein resides in the cytoplasm. The enzyme catalyses L-seryl-[isocitrate dehydrogenase] + ATP = O-phospho-L-seryl-[isocitrate dehydrogenase] + ADP + H(+). Its function is as follows. Bifunctional enzyme which can phosphorylate or dephosphorylate isocitrate dehydrogenase (IDH) on a specific serine residue. This is a regulatory mechanism which enables bacteria to bypass the Krebs cycle via the glyoxylate shunt in response to the source of carbon. When bacteria are grown on glucose, IDH is fully active and unphosphorylated, but when grown on acetate or ethanol, the activity of IDH declines drastically concomitant with its phosphorylation. In Bordetella bronchiseptica (strain ATCC BAA-588 / NCTC 13252 / RB50) (Alcaligenes bronchisepticus), this protein is Isocitrate dehydrogenase kinase/phosphatase.